The chain runs to 159 residues: MRVGCGYDSHRWAAKRKLILGGVEIPHEFGLTGHSDADALTHAICDALLGAISEGDIGFQFPDSDPAYSGISSLKLLSKILEMVDKKGFAIDYIDSTVIMERPKLMPYIPDMKSKIAGVLKMPSDRINIKAKTNEGMGFVGRQEGVAVFAVALVKENQD.

Residues Asp8 and His10 each contribute to the a divalent metal cation site. Residues 8–10 (DSH) and 34–35 (HS) contribute to the 4-CDP-2-C-methyl-D-erythritol 2-phosphate site. A divalent metal cation is bound at residue His42. 4-CDP-2-C-methyl-D-erythritol 2-phosphate-binding positions include 56-58 (DIG), 61-65 (FPDSD), Phe139, and Arg142.

This sequence belongs to the IspF family. In terms of assembly, homotrimer. A divalent metal cation serves as cofactor.

The catalysed reaction is 4-CDP-2-C-methyl-D-erythritol 2-phosphate = 2-C-methyl-D-erythritol 2,4-cyclic diphosphate + CMP. It functions in the pathway isoprenoid biosynthesis; isopentenyl diphosphate biosynthesis via DXP pathway; isopentenyl diphosphate from 1-deoxy-D-xylulose 5-phosphate: step 4/6. Involved in the biosynthesis of isopentenyl diphosphate (IPP) and dimethylallyl diphosphate (DMAPP), two major building blocks of isoprenoid compounds. Catalyzes the conversion of 4-diphosphocytidyl-2-C-methyl-D-erythritol 2-phosphate (CDP-ME2P) to 2-C-methyl-D-erythritol 2,4-cyclodiphosphate (ME-CPP) with a corresponding release of cytidine 5-monophosphate (CMP). This is 2-C-methyl-D-erythritol 2,4-cyclodiphosphate synthase from Syntrophus aciditrophicus (strain SB).